The chain runs to 172 residues: Small ribosomal subunit protein uS5 (172 aa).

Positions 15 to 78 constitute an S5 DRBM domain; that stretch reads LNDKLIFINR…ANAKRNLSRI (64 aa).

Belongs to the universal ribosomal protein uS5 family. Part of the 30S ribosomal subunit. Contacts proteins S4 and S8.

Functionally, with S4 and S12 plays an important role in translational accuracy. In terms of biological role, located at the back of the 30S subunit body where it stabilizes the conformation of the head with respect to the body. The polypeptide is Small ribosomal subunit protein uS5 (Dehalococcoides mccartyi (strain ATCC BAA-2266 / KCTC 15142 / 195) (Dehalococcoides ethenogenes (strain 195))).